We begin with the raw amino-acid sequence, 274 residues long: Thymidylate synthase (274 aa).

Arg-21 contacts dUMP. (6R)-5,10-methylene-5,6,7,8-tetrahydrofolate is bound at residue His-51. 123-124 (RR) contributes to the dUMP binding site. Cys-156 (nucleophile) is an active-site residue. Residues 176–179 (RSAD), Asn-187, and 217–219 (HIY) each bind dUMP. Position 179 (Asp-179) interacts with (6R)-5,10-methylene-5,6,7,8-tetrahydrofolate. Residue Ser-273 coordinates (6R)-5,10-methylene-5,6,7,8-tetrahydrofolate.

The protein belongs to the thymidylate synthase family. Bacterial-type ThyA subfamily. Homodimer.

Its subcellular location is the cytoplasm. It carries out the reaction dUMP + (6R)-5,10-methylene-5,6,7,8-tetrahydrofolate = 7,8-dihydrofolate + dTMP. Its pathway is pyrimidine metabolism; dTTP biosynthesis. In terms of biological role, catalyzes the reductive methylation of 2'-deoxyuridine-5'-monophosphate (dUMP) to 2'-deoxythymidine-5'-monophosphate (dTMP) while utilizing 5,10-methylenetetrahydrofolate (mTHF) as the methyl donor and reductant in the reaction, yielding dihydrofolate (DHF) as a by-product. This enzymatic reaction provides an intracellular de novo source of dTMP, an essential precursor for DNA biosynthesis. In Francisella tularensis subsp. holarctica (strain FTNF002-00 / FTA), this protein is Thymidylate synthase.